Here is a 149-residue protein sequence, read N- to C-terminus: Gamma-glutamylaminecyclotransferase (149 aa).

Substrate is bound at residue 7-10; it reads YGTL. The Proton acceptor role is filled by Glu-82.

Belongs to the gamma-glutamylcyclotransferase family. Monomer.

It catalyses the reaction epsilon-(gamma-L-glutamyl)-L-lysine = 5-oxo-L-proline + L-lysine. Its function is as follows. Contributes to degradation of proteins cross-linked by transglutaminases by degrading the cross-link between a lysine and a glutamic acid residue. Catalyzes the formation of 5-oxo-L-proline from L-gamma-glutamyl-L-epsilon-lysine. Inactive with L-gamma-glutamyl-alpha-amino acid substrates such as L-gamma-glutamyl-L-alpha-cysteine and L-gamma-glutamyl-L-alpha-alanine. This is Gamma-glutamylaminecyclotransferase (Ggact) from Rattus norvegicus (Rat).